Consider the following 360-residue polypeptide: 3-dehydroquinate synthase (360 aa).

NAD(+)-binding positions include 70-75 (DGESLK), 128-129 (TT), Lys-141, and Lys-150. Residues Glu-182, His-243, and His-259 each coordinate Zn(2+).

This sequence belongs to the sugar phosphate cyclases superfamily. Dehydroquinate synthase family. Requires NAD(+) as cofactor. The cofactor is Co(2+). Zn(2+) is required as a cofactor.

Its subcellular location is the cytoplasm. The enzyme catalyses 7-phospho-2-dehydro-3-deoxy-D-arabino-heptonate = 3-dehydroquinate + phosphate. It participates in metabolic intermediate biosynthesis; chorismate biosynthesis; chorismate from D-erythrose 4-phosphate and phosphoenolpyruvate: step 2/7. Functionally, catalyzes the conversion of 3-deoxy-D-arabino-heptulosonate 7-phosphate (DAHP) to dehydroquinate (DHQ). The sequence is that of 3-dehydroquinate synthase from Thermoplasma volcanium (strain ATCC 51530 / DSM 4299 / JCM 9571 / NBRC 15438 / GSS1).